The sequence spans 154 residues: Ribosomal RNA large subunit methyltransferase H (154 aa).

Residues Leu70, Gly102, and 121-126 (LSRMTL) contribute to the S-adenosyl-L-methionine site.

This sequence belongs to the RNA methyltransferase RlmH family. Homodimer.

It is found in the cytoplasm. The catalysed reaction is pseudouridine(1915) in 23S rRNA + S-adenosyl-L-methionine = N(3)-methylpseudouridine(1915) in 23S rRNA + S-adenosyl-L-homocysteine + H(+). Its function is as follows. Specifically methylates the pseudouridine at position 1915 (m3Psi1915) in 23S rRNA. The protein is Ribosomal RNA large subunit methyltransferase H of Geobacter sp. (strain M21).